The following is a 429-amino-acid chain: Phosphoribosylamine--glycine ligase (429 aa).

An ATP-grasp domain is found at 109–316; sequence KDFLARHHIP…LVELCLAACD (208 aa). ATP is bound at residue 135-196; it reads LREKGAPIVV…EEFLDGEEAS (62 aa). A disordered region spans residues 209-231; it reads MATSQDHKRVGENDTGLNTGGMG. Glu286 and Asn288 together coordinate Mg(2+).

This sequence belongs to the GARS family. It depends on Mg(2+) as a cofactor. Mn(2+) serves as cofactor.

It carries out the reaction 5-phospho-beta-D-ribosylamine + glycine + ATP = N(1)-(5-phospho-beta-D-ribosyl)glycinamide + ADP + phosphate + H(+). Its pathway is purine metabolism; IMP biosynthesis via de novo pathway; N(1)-(5-phospho-D-ribosyl)glycinamide from 5-phospho-alpha-D-ribose 1-diphosphate: step 2/2. The chain is Phosphoribosylamine--glycine ligase from Pasteurella multocida (strain Pm70).